A 375-amino-acid chain; its full sequence is Killer cell immunoglobulin-like receptor 2DL5A (375 aa).

The first 21 residues, 1-21 (MSLMVISMACVGFFLLQGAWT), serve as a signal peptide directing secretion. The Extracellular portion of the chain corresponds to 22 to 238 (HEGGQDKPLL…PSSKTGIRRH (217 aa)). Ig-like C2-type domains are found at residues 42–102 (GGHV…HPRS) and 137–200 (GENV…LHDS). Cys-49 and Cys-95 are joined by a disulfide. Asn-139, Asn-173, and Asn-218 each carry an N-linked (GlcNAc...) asparagine glycan. Cys-144 and Cys-193 form a disulfide bridge. Residues 213–233 (VSVTGNSSSSSSSPTEPSSKT) form a disordered region. Residues 219 to 231 (SSSSSSSPTEPSS) are compositionally biased toward low complexity. A helical transmembrane segment spans residues 239-259 (LHILIGTSVAIILFIILFFFL). Topologically, residues 260–375 (LHCCCSNKKN…ASSHVPAAGI (116 aa)) are cytoplasmic. The segment at 334 to 375 (AKPRSLSPAHKHHSQALRGSSRETTALSQNRVASSHVPAAGI) is disordered. The span at 355–366 (RETTALSQNRVA) shows a compositional bias: polar residues.

It belongs to the immunoglobulin superfamily.

Its subcellular location is the cell membrane. Functionally, receptor on natural killer (NK) cells for HLA-C alleles. Inhibits the activity of NK cells thus preventing cell lysis. The protein is Killer cell immunoglobulin-like receptor 2DL5A (KIR2DL5A) of Homo sapiens (Human).